We begin with the raw amino-acid sequence, 624 residues long: Glutamine--fructose-6-phosphate aminotransferase [isomerizing] (624 aa).

Catalysis depends on cysteine 2, which acts as the Nucleophile; for GATase activity. In terms of domain architecture, Glutamine amidotransferase type-2 spans 2-226 (CGIVGYVGQQ…QDQAVVLTAD (225 aa)). SIS domains follow at residues 297-436 (SDQE…ARGT) and 469-614 (LAQR…VDKP). The For Fru-6P isomerization activity role is filled by lysine 619.

Homodimer.

The protein resides in the cytoplasm. It catalyses the reaction D-fructose 6-phosphate + L-glutamine = D-glucosamine 6-phosphate + L-glutamate. Functionally, catalyzes the first step in hexosamine metabolism, converting fructose-6P into glucosamine-6P using glutamine as a nitrogen source. This is Glutamine--fructose-6-phosphate aminotransferase [isomerizing] from Mycolicibacterium paratuberculosis (strain ATCC BAA-968 / K-10) (Mycobacterium paratuberculosis).